We begin with the raw amino-acid sequence, 429 residues long: Chaperone SurA (429 aa).

Residues 1-18 (MFKRIALVCALFSGVCFA) form the signal peptide. 2 consecutive PpiC domains span residues 170-271 (NLTY…KLVA) and 281-380 (ITQT…EVIA).

It is found in the periplasm. It carries out the reaction [protein]-peptidylproline (omega=180) = [protein]-peptidylproline (omega=0). Its function is as follows. Chaperone involved in the correct folding and assembly of outer membrane proteins. Recognizes specific patterns of aromatic residues and the orientation of their side chains, which are found more frequently in integral outer membrane proteins. May act in both early periplasmic and late outer membrane-associated steps of protein maturation. The chain is Chaperone SurA from Legionella pneumophila (strain Lens).